The sequence spans 85 residues: Small ribosomal subunit protein uS17 (85 aa).

Belongs to the universal ribosomal protein uS17 family. Part of the 30S ribosomal subunit.

Functionally, one of the primary rRNA binding proteins, it binds specifically to the 5'-end of 16S ribosomal RNA. The polypeptide is Small ribosomal subunit protein uS17 (Mycoplasmoides gallisepticum (strain R(low / passage 15 / clone 2)) (Mycoplasma gallisepticum)).